Consider the following 616-residue polypeptide: Chaperone protein HscA (616 aa).

It belongs to the heat shock protein 70 family.

In terms of biological role, chaperone involved in the maturation of iron-sulfur cluster-containing proteins. Has a low intrinsic ATPase activity which is markedly stimulated by HscB. Involved in the maturation of IscU. The sequence is that of Chaperone protein HscA from Salmonella paratyphi C (strain RKS4594).